The following is a 585-amino-acid chain: tRNA-guanine(15) transglycosylase (585 aa).

The active-site Nucleophile is the Asp-95. Positions 130 and 196 each coordinate substrate. The Zn(2+) site is built by Cys-279, Cys-281, and Cys-284. Residues Val-507 to Glu-582 form the PUA domain.

The protein belongs to the archaeosine tRNA-ribosyltransferase family. Zn(2+) is required as a cofactor.

The catalysed reaction is guanosine(15) in tRNA + 7-cyano-7-deazaguanine = 7-cyano-7-carbaguanosine(15) in tRNA + guanine. The protein operates within tRNA modification; archaeosine-tRNA biosynthesis. Exchanges the guanine residue with 7-cyano-7-deazaguanine (preQ0) at position 15 in the dihydrouridine loop (D-loop) of archaeal tRNAs. This chain is tRNA-guanine(15) transglycosylase, found in Pyrococcus furiosus (strain ATCC 43587 / DSM 3638 / JCM 8422 / Vc1).